The chain runs to 953 residues: Isoleucine--tRNA ligase (953 aa).

Positions 58–68 (PYANGSIHIGH) match the 'HIGH' region motif. Residue glutamate 577 participates in L-isoleucyl-5'-AMP binding. The short motif at 618–622 (KMSKS) is the 'KMSKS' region element. Lysine 621 contributes to the ATP binding site. Zn(2+) is bound by residues cysteine 916, cysteine 919, cysteine 936, and cysteine 939.

This sequence belongs to the class-I aminoacyl-tRNA synthetase family. IleS type 1 subfamily. In terms of assembly, monomer. Zn(2+) serves as cofactor.

It is found in the cytoplasm. The enzyme catalyses tRNA(Ile) + L-isoleucine + ATP = L-isoleucyl-tRNA(Ile) + AMP + diphosphate. Catalyzes the attachment of isoleucine to tRNA(Ile). As IleRS can inadvertently accommodate and process structurally similar amino acids such as valine, to avoid such errors it has two additional distinct tRNA(Ile)-dependent editing activities. One activity is designated as 'pretransfer' editing and involves the hydrolysis of activated Val-AMP. The other activity is designated 'posttransfer' editing and involves deacylation of mischarged Val-tRNA(Ile). The sequence is that of Isoleucine--tRNA ligase from Aeromonas hydrophila subsp. hydrophila (strain ATCC 7966 / DSM 30187 / BCRC 13018 / CCUG 14551 / JCM 1027 / KCTC 2358 / NCIMB 9240 / NCTC 8049).